A 758-amino-acid chain; its full sequence is 5-methyltetrahydropteroyltriglutamate--homocysteine methyltransferase (758 aa).

Residues 17 to 20 (RELK) and Lys117 contribute to the 5-methyltetrahydropteroyltri-L-glutamate site. Residues 434-436 (IGS) and Glu487 contribute to the L-homocysteine site. Residues 434–436 (IGS) and Glu487 contribute to the L-methionine site. 5-methyltetrahydropteroyltri-L-glutamate contacts are provided by residues 518–519 (RC) and Trp564. Residue Asp602 participates in L-homocysteine binding. L-methionine is bound at residue Asp602. Residue Glu608 coordinates 5-methyltetrahydropteroyltri-L-glutamate. Zn(2+) contacts are provided by His644, Cys646, and Glu668. Catalysis depends on His697, which acts as the Proton donor. Cys729 contributes to the Zn(2+) binding site.

Belongs to the vitamin-B12 independent methionine synthase family. It depends on Zn(2+) as a cofactor.

The catalysed reaction is 5-methyltetrahydropteroyltri-L-glutamate + L-homocysteine = tetrahydropteroyltri-L-glutamate + L-methionine. It participates in amino-acid biosynthesis; L-methionine biosynthesis via de novo pathway; L-methionine from L-homocysteine (MetE route): step 1/1. In terms of biological role, catalyzes the transfer of a methyl group from 5-methyltetrahydrofolate to homocysteine resulting in methionine formation. The polypeptide is 5-methyltetrahydropteroyltriglutamate--homocysteine methyltransferase (Yersinia pestis (strain Pestoides F)).